We begin with the raw amino-acid sequence, 375 residues long: Chaperone protein DnaJ (375 aa).

The region spanning 5-70 (DFYEVLGVER…SKRAAYDQYG (66 aa)) is the J domain. The CR-type zinc finger occupies 134–212 (GTTVSIRVPT…CHGEGRVEEY (79 aa)). Positions 147, 150, 164, 167, 186, 189, 200, and 203 each coordinate Zn(2+). CXXCXGXG motif repeat units follow at residues 147–154 (CKPCDGSG), 164–171 (CPTCGGIG), 186–193 (CPRCHGQG), and 200–207 (CNSCHGEG).

It belongs to the DnaJ family. As to quaternary structure, homodimer. Zn(2+) serves as cofactor.

The protein resides in the cytoplasm. Functionally, participates actively in the response to hyperosmotic and heat shock by preventing the aggregation of stress-denatured proteins and by disaggregating proteins, also in an autonomous, DnaK-independent fashion. Unfolded proteins bind initially to DnaJ; upon interaction with the DnaJ-bound protein, DnaK hydrolyzes its bound ATP, resulting in the formation of a stable complex. GrpE releases ADP from DnaK; ATP binding to DnaK triggers the release of the substrate protein, thus completing the reaction cycle. Several rounds of ATP-dependent interactions between DnaJ, DnaK and GrpE are required for fully efficient folding. Also involved, together with DnaK and GrpE, in the DNA replication of plasmids through activation of initiation proteins. The polypeptide is Chaperone protein DnaJ (Pseudomonas entomophila (strain L48)).